The sequence spans 253 residues: Pre-mRNA-splicing factor SPF27 homolog (253 aa).

Residues 124 to 235 (KQYLQKNQRS…IDSFKKEAAE (112 aa)) are a coiled coil.

It belongs to the SPF27 family. As to quaternary structure, component of the multiprotein assembly MOS4-associated complex (MAC) at least composed of MOS4, CDC5 and PRL1. Interacts with CYCL1-1 and CDC5. Associated with the spliceosome. Interacts with ENY2.

It is found in the nucleus. Functionally, component of the MAC complex that probably regulates defense responses through transcriptional control and thereby is essential for plant innate immunity. Involved in mRNA splicing. In Arabidopsis thaliana (Mouse-ear cress), this protein is Pre-mRNA-splicing factor SPF27 homolog (MOS4).